A 671-amino-acid polypeptide reads, in one-letter code: DNA ligase (671 aa).

NAD(+) is bound by residues 32-36 (DAEYD), 81-82 (SL), and Glu113. Residue Lys115 is the N6-AMP-lysine intermediate of the active site. Residues Arg136, Glu173, Lys290, and Lys314 each coordinate NAD(+). 4 residues coordinate Zn(2+): Cys408, Cys411, Cys426, and Cys432. Residues 593–671 (EIDSPFAGKT…EAEMLRLLGS (79 aa)) form the BRCT domain.

It belongs to the NAD-dependent DNA ligase family. LigA subfamily. It depends on Mg(2+) as a cofactor. Mn(2+) is required as a cofactor.

The enzyme catalyses NAD(+) + (deoxyribonucleotide)n-3'-hydroxyl + 5'-phospho-(deoxyribonucleotide)m = (deoxyribonucleotide)n+m + AMP + beta-nicotinamide D-nucleotide.. DNA ligase that catalyzes the formation of phosphodiester linkages between 5'-phosphoryl and 3'-hydroxyl groups in double-stranded DNA using NAD as a coenzyme and as the energy source for the reaction. It is essential for DNA replication and repair of damaged DNA. The sequence is that of DNA ligase from Escherichia coli (strain ATCC 8739 / DSM 1576 / NBRC 3972 / NCIMB 8545 / WDCM 00012 / Crooks).